We begin with the raw amino-acid sequence, 192 residues long: UPF0301 protein BTH_I1462 (192 aa).

Belongs to the UPF0301 (AlgH) family.

This is UPF0301 protein BTH_I1462 from Burkholderia thailandensis (strain ATCC 700388 / DSM 13276 / CCUG 48851 / CIP 106301 / E264).